Here is a 115-residue protein sequence, read N- to C-terminus: Aspartate 1-decarboxylase (115 aa).

The Schiff-base intermediate with substrate; via pyruvic acid role is filled by Ser25. Pyruvic acid (Ser) is present on Ser25. Position 57 (Thr57) interacts with substrate. Tyr58 functions as the Proton donor in the catalytic mechanism. A substrate-binding site is contributed by 71–73; the sequence is GAA.

The protein belongs to the PanD family. Heterooctamer of four alpha and four beta subunits. Pyruvate is required as a cofactor. Post-translationally, is synthesized initially as an inactive proenzyme, which is activated by self-cleavage at a specific serine bond to produce a beta-subunit with a hydroxyl group at its C-terminus and an alpha-subunit with a pyruvoyl group at its N-terminus.

It is found in the cytoplasm. The enzyme catalyses L-aspartate + H(+) = beta-alanine + CO2. It functions in the pathway cofactor biosynthesis; (R)-pantothenate biosynthesis; beta-alanine from L-aspartate: step 1/1. Catalyzes the pyruvoyl-dependent decarboxylation of aspartate to produce beta-alanine. The protein is Aspartate 1-decarboxylase of Campylobacter curvus (strain 525.92).